Here is a 141-residue protein sequence, read N- to C-terminus: Hemoglobin subunit alpha (141 aa).

Positions 1 to 141 (VLSAADKTAI…VATALGSHYR (141 aa)) constitute a Globin domain. His59 provides a ligand contact to O2. His88 is a binding site for heme b.

Belongs to the globin family. As to quaternary structure, heterotetramer of two alpha chains and two beta chains. Red blood cells.

In terms of biological role, involved in oxygen transport from the lung to the various peripheral tissues. The sequence is that of Hemoglobin subunit alpha (HBA) from Squalus acanthias (Spiny dogfish).